The following is a 741-amino-acid chain: Exostosin-1b (741 aa).

Residues 1–7 (MQAKKRY) are Cytoplasmic-facing. The helical; Signal-anchor for type II membrane protein transmembrane segment at 8 to 28 (LISLLTGAFLVLLIYLGGGGV) threads the bilayer. Topologically, residues 29-741 (PGPAAPGSRS…RKKYREIERL (713 aa)) are lumenal. N-linked (GlcNAc...) asparagine glycans are attached at residues Asn84 and Asn325. Positions 435, 544, 560, 561, 562, 648, 649, and 696 each coordinate UDP-N-acetyl-alpha-D-glucosamine. Asp562 is a binding site for Mn(2+). Cys647 and Cys699 form a disulfide bridge. The active site involves Asp649.

Belongs to the glycosyltransferase 47 family. Requires Mn(2+) as cofactor.

Its subcellular location is the endoplasmic reticulum membrane. It catalyses the reaction 3-O-{[(1-&gt;4)-beta-D-GlcA-(1-&gt;4)-alpha-D-GlcNAc](n)-(1-&gt;4)-beta-D-GlcA-(1-&gt;3)-beta-D-Gal-(1-&gt;3)-beta-D-Gal-(1-&gt;4)-beta-D-Xyl}-L-seryl-[protein] + UDP-N-acetyl-alpha-D-glucosamine = 3-O-{alpha-D-GlcNAc-[(1-&gt;4)-beta-D-GlcA-(1-&gt;4)-alpha-D-GlcNAc](n)-(1-&gt;4)-beta-D-GlcA-(1-&gt;3)-beta-D-Gal-(1-&gt;3)-beta-D-Gal-(1-&gt;4)-beta-D-Xyl}-L-seryl-[protein] + UDP + H(+). It carries out the reaction 3-O-{alpha-D-GlcNAc-[(1-&gt;4)-beta-D-GlcA-(1-&gt;4)-alpha-D-GlcNAc](n)-(1-&gt;4)-beta-D-GlcA-(1-&gt;3)-beta-D-Gal-(1-&gt;3)-beta-D-Gal-(1-&gt;4)-beta-D-Xyl}-L-seryl-[protein] + UDP-alpha-D-glucuronate = 3-O-{[(1-&gt;4)-beta-D-GlcA-(1-&gt;4)-alpha-D-GlcNAc](n+1)-(1-&gt;4)-beta-D-GlcA-(1-&gt;3)-beta-D-Gal-(1-&gt;3)-beta-D-Gal-(1-&gt;4)-beta-D-Xyl}-L-seryl-[protein] + UDP + H(+). The protein operates within protein modification; protein glycosylation. Glycosyltransferase required for the biosynthesis of heparan-sulfate. The protein is Exostosin-1b (ext1b) of Danio rerio (Zebrafish).